Consider the following 227-residue polypeptide: Isoprenyl transferase (227 aa).

Asp-13 is an active-site residue. Asp-13 is a binding site for Mg(2+). Substrate-binding positions include Gly-14 to Arg-17, Trp-18, Arg-26, His-30, and Ser-58 to Glu-60. Asn-61 (proton acceptor) is an active-site residue. Residues Trp-62, Arg-64, Arg-175, and Arg-181–Ser-183 each bind substrate. Position 194 (Glu-194) interacts with Mg(2+).

It belongs to the UPP synthase family. Homodimer. Mg(2+) serves as cofactor.

Functionally, catalyzes the condensation of isopentenyl diphosphate (IPP) with allylic pyrophosphates generating different type of terpenoids. The polypeptide is Isoprenyl transferase (Treponema denticola (strain ATCC 35405 / DSM 14222 / CIP 103919 / JCM 8153 / KCTC 15104)).